Here is a 104-residue protein sequence, read N- to C-terminus: Flagellar hook-basal body complex protein FliE (104 aa).

Belongs to the FliE family.

The protein resides in the bacterial flagellum basal body. The chain is Flagellar hook-basal body complex protein FliE from Enterobacter sp. (strain 638).